Here is a 132-residue protein sequence, read N- to C-terminus: MVMTDPIADFLTRIRNANQANHEVLEVPASNIKKGIAEILKREGFVKNVEIIEDDKQGIIRVFLKYGQNGEKVITGLKRISKPGLRVYKKREDLPKVLNGLGIAILSTSEGLLTDKEARQKNVGGEVIAYVW.

The protein belongs to the universal ribosomal protein uS8 family. As to quaternary structure, part of the 30S ribosomal subunit. Contacts proteins S5 and S12.

Its function is as follows. One of the primary rRNA binding proteins, it binds directly to 16S rRNA central domain where it helps coordinate assembly of the platform of the 30S subunit. This is Small ribosomal subunit protein uS8 from Streptococcus sanguinis (strain SK36).